The sequence spans 529 residues: Tyrosinase (529 aa).

The N-terminal stretch at 1-18 (MLLAALCCLLWSFRTSAG) is a signal peptide. Over 19–472 (HFPRACASSK…IKPFLEQASR (454 aa)) the chain is Lumenal. N-linked (GlcNAc...) asparagine glycans are attached at residues N86, N111, and N161. Residues H180, H202, and H211 each coordinate Cu cation. 2 N-linked (GlcNAc...) asparagine glycosylation sites follow: N230 and N336. Residues H362 and H366 each contribute to the Cu cation site. A glycan (N-linked (GlcNAc...) asparagine) is linked at N370. Residue H389 participates in Cu cation binding. The chain crosses the membrane as a helical span at residues 473-495 (IWPWLIGAAVVGSVLTAVLGRLT). Residues 496-529 (SLLCRRKRKQLREERQPLLMEKEDYHSLLYQTHV) lie on the Cytoplasmic side of the membrane.

The protein belongs to the tyrosinase family. In terms of assembly, forms an OPN3-dependent complex with DCT in response to blue light in melanocytes. It depends on Cu(2+) as a cofactor. Post-translationally, glycosylated.

Its subcellular location is the melanosome membrane. It localises to the melanosome. It catalyses the reaction 2 L-dopa + O2 = 2 L-dopaquinone + 2 H2O. It carries out the reaction L-tyrosine + O2 = L-dopaquinone + H2O. The enzyme catalyses 2 5,6-dihydroxyindole-2-carboxylate + O2 = 2 indole-5,6-quinone-2-carboxylate + 2 H2O. Functionally, this is a copper-containing oxidase that functions in the formation of pigments such as melanins and other polyphenolic compounds. Catalyzes the initial and rate limiting step in the cascade of reactions leading to melanin production from tyrosine. In addition to hydroxylating tyrosine to DOPA (3,4-dihydroxyphenylalanine), also catalyzes the oxidation of DOPA to DOPA-quinone, and possibly the oxidation of DHI (5,6-dihydroxyindole) to indole-5,6 quinone. The chain is Tyrosinase (TYR) from Felis catus (Cat).